The sequence spans 151 residues: Transcriptional regulator MraZ (151 aa).

SpoVT-AbrB domains follow at residues 5–52 and 81–124; these read ANAI…PLSE and AVDL…DEDA.

It belongs to the MraZ family. As to quaternary structure, forms oligomers.

Its subcellular location is the cytoplasm. The protein resides in the nucleoid. The chain is Transcriptional regulator MraZ from Pseudomonas syringae pv. tomato (strain ATCC BAA-871 / DC3000).